Here is a 487-residue protein sequence, read N- to C-terminus: Glutamyl-tRNA(Gln) amidotransferase subunit A (487 aa).

Active-site charge relay system residues include lysine 78 and serine 153. Residue serine 177 is the Acyl-ester intermediate of the active site.

Belongs to the amidase family. GatA subfamily. In terms of assembly, heterotrimer of A, B and C subunits.

It carries out the reaction L-glutamyl-tRNA(Gln) + L-glutamine + ATP + H2O = L-glutaminyl-tRNA(Gln) + L-glutamate + ADP + phosphate + H(+). Functionally, allows the formation of correctly charged Gln-tRNA(Gln) through the transamidation of misacylated Glu-tRNA(Gln) in organisms which lack glutaminyl-tRNA synthetase. The reaction takes place in the presence of glutamine and ATP through an activated gamma-phospho-Glu-tRNA(Gln). This Oenococcus oeni (strain ATCC BAA-331 / PSU-1) protein is Glutamyl-tRNA(Gln) amidotransferase subunit A.